We begin with the raw amino-acid sequence, 358 residues long: F-box protein At4g35733 (358 aa).

The region spanning 4–51 (ATVWSDLPGELLDHIANGLFSKVELLRFRSICKTFRSAVDSDKNFLDH) is the F-box domain.

As to quaternary structure, part of a SCF (ASK-cullin-F-box) protein ligase complex.

It participates in protein modification; protein ubiquitination. Its function is as follows. Component of SCF(ASK-cullin-F-box) E3 ubiquitin ligase complexes, which may mediate the ubiquitination and subsequent proteasomal degradation of target proteins. In Arabidopsis thaliana (Mouse-ear cress), this protein is F-box protein At4g35733.